The sequence spans 151 residues: Large ribosomal subunit protein bL9 (151 aa).

The protein belongs to the bacterial ribosomal protein bL9 family.

Its function is as follows. Binds to the 23S rRNA. This Mycoplasmopsis agalactiae (strain NCTC 10123 / CIP 59.7 / PG2) (Mycoplasma agalactiae) protein is Large ribosomal subunit protein bL9.